The sequence spans 161 residues: Regulator of ribonuclease activity A (161 aa).

The protein belongs to the RraA family. In terms of assembly, homotrimer. Binds to both RNA-binding sites in the C-terminal region of Rne and to RhlB.

It localises to the cytoplasm. In terms of biological role, globally modulates RNA abundance by binding to RNase E (Rne) and regulating its endonucleolytic activity. Can modulate Rne action in a substrate-dependent manner by altering the composition of the degradosome. Modulates RNA-binding and helicase activities of the degradosome. The protein is Regulator of ribonuclease activity A of Pseudoalteromonas atlantica (strain T6c / ATCC BAA-1087).